A 492-amino-acid chain; its full sequence is Ketol-acid reductoisomerase (NADP(+)) (492 aa).

Residues 15-208 (AQLGKCRFMA…GGHRAGVLEF (194 aa)) form the KARI N-terminal Rossmann domain. NADP(+) is bound by residues 45–48 (CGAQ), Arg68, Arg76, Ser78, and 108–110 (DKQ). The active site involves His132. Gly158 serves as a coordination point for NADP(+). KARI C-terminal knotted domains lie at 209-344 (SFVA…NAPQ) and 345-485 (FEGK…MTDM). Mg(2+) is bound by residues Asp217, Glu221, Glu389, and Glu393. Ser414 serves as a coordination point for substrate.

This sequence belongs to the ketol-acid reductoisomerase family. Mg(2+) is required as a cofactor.

It catalyses the reaction (2R)-2,3-dihydroxy-3-methylbutanoate + NADP(+) = (2S)-2-acetolactate + NADPH + H(+). The catalysed reaction is (2R,3R)-2,3-dihydroxy-3-methylpentanoate + NADP(+) = (S)-2-ethyl-2-hydroxy-3-oxobutanoate + NADPH + H(+). The protein operates within amino-acid biosynthesis; L-isoleucine biosynthesis; L-isoleucine from 2-oxobutanoate: step 2/4. Its pathway is amino-acid biosynthesis; L-valine biosynthesis; L-valine from pyruvate: step 2/4. Involved in the biosynthesis of branched-chain amino acids (BCAA). Catalyzes an alkyl-migration followed by a ketol-acid reduction of (S)-2-acetolactate (S2AL) to yield (R)-2,3-dihydroxy-isovalerate. In the isomerase reaction, S2AL is rearranged via a Mg-dependent methyl migration to produce 3-hydroxy-3-methyl-2-ketobutyrate (HMKB). In the reductase reaction, this 2-ketoacid undergoes a metal-dependent reduction by NADPH to yield (R)-2,3-dihydroxy-isovalerate. The chain is Ketol-acid reductoisomerase (NADP(+)) from Yersinia pestis bv. Antiqua (strain Antiqua).